The following is a 306-amino-acid chain: NAD-dependent protein deacylase (306 aa).

One can recognise a Deacetylase sirtuin-type domain in the interval 1 to 305 (MNKQLKEFQE…PIALKPLIGD (305 aa)). 23–42 (GAGLSASSGLPTFRGSQGLW) contacts NAD(+). 2 residues coordinate substrate: Tyr67 and Arg70. 103 to 106 (QNVD) provides a ligand contact to NAD(+). The active-site Proton acceptor is His123. Zn(2+) contacts are provided by Cys131, Cys136, Cys200, and Cys203. Residues 243-245 (GTS), 269-271 (NTD), and Ala291 each bind NAD(+).

This sequence belongs to the sirtuin family. Class III subfamily. It depends on Zn(2+) as a cofactor.

It is found in the mitochondrion. It carries out the reaction N(6)-malonyl-L-lysyl-[protein] + NAD(+) + H2O = 2''-O-malonyl-ADP-D-ribose + nicotinamide + L-lysyl-[protein]. The enzyme catalyses N(6)-succinyl-L-lysyl-[protein] + NAD(+) + H2O = 2''-O-succinyl-ADP-D-ribose + nicotinamide + L-lysyl-[protein]. The catalysed reaction is N(6)-glutaryl-L-lysyl-[protein] + NAD(+) + H2O = 2''-O-glutaryl-ADP-D-ribose + nicotinamide + L-lysyl-[protein]. In terms of biological role, NAD-dependent lysine demalonylase, desuccinylase and deglutarylase that specifically removes malonyl, succinyl and glutaryl groups on target proteins. Has weak NAD-dependent protein deacetylase activity; however this activity may not be physiologically relevant in vivo. The sequence is that of NAD-dependent protein deacylase from Candida albicans (strain SC5314 / ATCC MYA-2876) (Yeast).